The chain runs to 119 residues: Large ribosomal subunit protein uL22 (119 aa).

Belongs to the universal ribosomal protein uL22 family. As to quaternary structure, part of the 50S ribosomal subunit.

Its function is as follows. This protein binds specifically to 23S rRNA; its binding is stimulated by other ribosomal proteins, e.g. L4, L17, and L20. It is important during the early stages of 50S assembly. It makes multiple contacts with different domains of the 23S rRNA in the assembled 50S subunit and ribosome. In terms of biological role, the globular domain of the protein is located near the polypeptide exit tunnel on the outside of the subunit, while an extended beta-hairpin is found that lines the wall of the exit tunnel in the center of the 70S ribosome. The polypeptide is Large ribosomal subunit protein uL22 (Microcystis aeruginosa (strain NIES-843 / IAM M-2473)).